The sequence spans 270 residues: uncharacterized protein (270 aa).

This is an uncharacterized protein from Methanocaldococcus jannaschii (strain ATCC 43067 / DSM 2661 / JAL-1 / JCM 10045 / NBRC 100440) (Methanococcus jannaschii).